The sequence spans 578 residues: Acyl-coenzyme A synthetase ACSM5, mitochondrial (578 aa).

A mitochondrion-targeting transit peptide spans 1–22 (MRLWLRGLACQALRSSWGVCRI). K96 carries the post-translational modification N6-acetyllysine; alternate. An N6-succinyllysine; alternate modification is found at K96. Residue K151 is modified to N6-acetyllysine. 229-237 (TSGTTGAPK) is an ATP binding site. At K302 the chain carries N6-acetyllysine; alternate. The residue at position 302 (K302) is an N6-succinyllysine; alternate. N6-acetyllysine is present on K335. Residues 367–372 (EGYGQS), D454, R469, and K565 contribute to the ATP site.

This sequence belongs to the ATP-dependent AMP-binding enzyme family. Mg(2+) is required as a cofactor. The cofactor is Mn(2+).

Its subcellular location is the mitochondrion matrix. It catalyses the reaction a medium-chain fatty acid + ATP + CoA = a medium-chain fatty acyl-CoA + AMP + diphosphate. In terms of biological role, catalyzes the activation of fatty acids by CoA to produce an acyl-CoA, the first step in fatty acid metabolism. The protein is Acyl-coenzyme A synthetase ACSM5, mitochondrial (Acsm5) of Mus musculus (Mouse).